Consider the following 541-residue polypeptide: Molybdate transporter 1 (541 aa).

5 consecutive transmembrane segments (helical) span residues L24 to L44, L58 to V78, T98 to L118, A137 to W157, and G168 to V188. Residues Q193–K213 form a disordered region. Transmembrane regions (helical) follow at residues M214 to V234 and M287 to A307. The segment at P317 to G366 is disordered. A compositionally biased stretch (low complexity) spans D327–A351. 2 helical membrane passes run I413–L433 and L435–L455. The segment at T510–R541 is disordered.

The protein belongs to the SLC26A/SulP transporter (TC 2.A.53) family.

It is found in the vacuole membrane. Functionally, exports stored molybdate from the vacuole into the cytosol, making it available for molybdate cofactor (Moco) biosynthesis. Plays a role in molybdate homeostasis as high cytosolic levels of molybdate are toxic to cells. Not required for molybdate import into cells. The protein is Molybdate transporter 1 of Neurospora crassa (strain ATCC 24698 / 74-OR23-1A / CBS 708.71 / DSM 1257 / FGSC 987).